Reading from the N-terminus, the 329-residue chain is NAD(+) hydrolase TcpA (329 aa).

An MPN domain is found at 5-134; that stretch reads VSISYLALEQ…ADCVRFYTVR (130 aa). Residues 192–324 enclose the TIR domain; the sequence is FEYDVFICHA…YVVNEILRVL (133 aa). Residues 201 to 202 and S231 each bind NAD(+); that span reads AH. E267 is a catalytic residue.

The enzyme catalyses NAD(+) + H2O = ADP-D-ribose + nicotinamide + H(+). Functionally, NAD(+) hydrolase (NADase) that catalyzes cleavage of NAD(+) into ADP-D-ribose (ADPR) and nicotinamide. The protein is NAD(+) hydrolase TcpA of Theionarchaea archaeon (strain DG-70-1).